The following is a 41-amino-acid chain: Ornatin-A3 (41 aa).

Residues 33 to 35 carry the Cell attachment site motif; sequence RGD.

It belongs to the ornatin family.

It is found in the secreted. Potent inhibitor of fibrinogen interaction with platelet receptors expressed on glycoprotein IIb-IIIa complex. May prevent blood from clotting during either feeding and/or storage of ingested blood. The chain is Ornatin-A3 from Placobdella ornata (Turtle leech).